The following is a 465-amino-acid chain: Siroheme synthase (465 aa).

The precorrin-2 dehydrogenase /sirohydrochlorin ferrochelatase stretch occupies residues 1 to 203 (MEYLPLFHNL…GRTAEAERLL (203 aa)). NAD(+) contacts are provided by residues 22-23 (EI) and 43-44 (PS). A Phosphoserine modification is found at S128. Positions 216 to 465 (GEVYLVGAGP…WFEGAQAAGR (250 aa)) are uroporphyrinogen-III C-methyltransferase. P225 is a binding site for S-adenosyl-L-methionine. The Proton acceptor role is filled by D248. The Proton donor role is filled by K270. S-adenosyl-L-methionine-binding positions include 301 to 303 (GGD), I306, 331 to 332 (TA), M383, and G412.

This sequence in the N-terminal section; belongs to the precorrin-2 dehydrogenase / sirohydrochlorin ferrochelatase family. In the C-terminal section; belongs to the precorrin methyltransferase family.

It carries out the reaction uroporphyrinogen III + 2 S-adenosyl-L-methionine = precorrin-2 + 2 S-adenosyl-L-homocysteine + H(+). The catalysed reaction is precorrin-2 + NAD(+) = sirohydrochlorin + NADH + 2 H(+). The enzyme catalyses siroheme + 2 H(+) = sirohydrochlorin + Fe(2+). Its pathway is cofactor biosynthesis; adenosylcobalamin biosynthesis; precorrin-2 from uroporphyrinogen III: step 1/1. The protein operates within cofactor biosynthesis; adenosylcobalamin biosynthesis; sirohydrochlorin from precorrin-2: step 1/1. It functions in the pathway porphyrin-containing compound metabolism; siroheme biosynthesis; precorrin-2 from uroporphyrinogen III: step 1/1. It participates in porphyrin-containing compound metabolism; siroheme biosynthesis; siroheme from sirohydrochlorin: step 1/1. Its pathway is porphyrin-containing compound metabolism; siroheme biosynthesis; sirohydrochlorin from precorrin-2: step 1/1. In terms of biological role, multifunctional enzyme that catalyzes the SAM-dependent methylations of uroporphyrinogen III at position C-2 and C-7 to form precorrin-2 via precorrin-1. Then it catalyzes the NAD-dependent ring dehydrogenation of precorrin-2 to yield sirohydrochlorin. Finally, it catalyzes the ferrochelation of sirohydrochlorin to yield siroheme. The sequence is that of Siroheme synthase from Stutzerimonas stutzeri (strain A1501) (Pseudomonas stutzeri).